Consider the following 1128-residue polypeptide: Major DNA-binding protein (1128 aa).

The required for nuclear localization stretch occupies residues 1104 to 1128 (LGGGGQGSGGRRKRRLATVLPGLEV).

This sequence belongs to the herpesviridae major DNA-binding protein family. In terms of assembly, homooligomers. Forms double-helical filaments necessary for the formation of replication compartments within the host nucleus. Interacts with the origin-binding protein. Interacts with the helicase primase complex; this interaction stimulates primer synthesis activity of the helicase-primase complex. Interacts with the DNA polymerase. Interacts with the alkaline exonuclease; this interaction increases its nuclease processivity.

It is found in the virion tegument. The protein localises to the host nucleus. Plays several crucial roles in viral infection. Participates in the opening of the viral DNA origin to initiate replication by interacting with the origin-binding protein. May disrupt loops, hairpins and other secondary structures present on ssDNA to reduce and eliminate pausing of viral DNA polymerase at specific sites during elongation. Promotes viral DNA recombination by performing strand-transfer, characterized by the ability to transfer a DNA strand from a linear duplex to a complementary single-stranded DNA circle. Can also catalyze the renaturation of complementary single strands. Additionally, reorganizes the host cell nucleus, leading to the formation of prereplicative sites and replication compartments. This process is driven by the protein which can form double-helical filaments in the absence of DNA. The protein is Major DNA-binding protein of Epstein-Barr virus (strain GD1) (HHV-4).